Reading from the N-terminus, the 528-residue chain is Beta-hexosaminidase subunit alpha (528 aa).

An N-terminal signal peptide occupies residues 1-22 (MAGCRLWVSLLLAAALACLATA). Positions 23–88 (LWPWPQYIQT…PRPSFSNKQQ (66 aa)) are excised as a propeptide. The cysteines at positions 58 and 104 are disulfide-linked. N-linked (GlcNAc...) asparagine glycans are attached at residues Asn-115, Asn-157, and Asn-295. Cysteines 277 and 328 form a disulfide. The active-site Proton donor is Glu-323. A critical for hydrolysis GM2 gangliosides region spans residues 422-423 (NR). An N-linked (GlcNAc...) asparagine glycan is attached at Asn-487. Cys-504 and Cys-521 are disulfide-bonded.

This sequence belongs to the glycosyl hydrolase 20 family. As to quaternary structure, there are 3 beta-hexosaminidase isozymes: isozyme A (hexosaminidase A) is a heterodimer composed of one subunit alpha and one subunit beta (chain A and B); isozyme B (hexosaminidase B) is a homodimer of two beta subunits (two chains A and B); isozyme S (hexosaminidase S) is a homodimer of two alpha subunits. The composition of the dimer (isozyme A versus isozyme S) has a significant effect on the substrate specificity of the alpha subunit active site. Ubiquitous. Most abundant in testis, adrenal, epididymis and heart. Low levels seen in the liver.

The protein resides in the lysosome. It carries out the reaction Hydrolysis of terminal non-reducing N-acetyl-D-hexosamine residues in N-acetyl-beta-D-hexosaminides.. It catalyses the reaction N-acetyl-beta-D-galactosaminyl-(1-&gt;4)-beta-D-3-sulfogalactosyl-(1-&gt;4)-beta-D-glucosyl-(1&lt;-&gt;1')-ceramide + H2O = a beta-D-3-sulfogalactosyl-(1-&gt;4)-beta-D-glucosyl-(1&lt;-&gt;1')-ceramide + N-acetyl-beta-D-galactosamine. The catalysed reaction is a ganglioside GM2 (d18:1(4E)) + H2O = a ganglioside GM3 (d18:1(4E)) + N-acetyl-beta-D-galactosamine. The enzyme catalyses a ganglioside GM2 + H2O = a ganglioside GM3 + N-acetyl-beta-D-galactosamine. It carries out the reaction beta-D-GalNAc-(1-&gt;4)-alpha-L-IdoA-(1-&gt;3)-beta-D-GalNAc-4-sulfate-(1-&gt;4)-alpha-L-IdoA-(1-&gt;3)-D-GalNAc-4-sulfate + H2O = alpha-L-IdoA-(1-&gt;3)-beta-D-GalNAc-4-sulfate-(1-&gt;4)-alpha-L-IdoA-(1-&gt;3)-D-GalNAc-4-sulfate + N-acetyl-D-galactosamine. It catalyses the reaction N-acetyl-beta-D-6-sulfogalactosaminyl-(1-&gt;4)-alpha-L-iduronyl-(1-&gt;3)-N-acetyl-D-6-sulfogalactosamine + H2O = alpha-L-iduronyl-(1-&gt;3)-N-acetyl-D-6-sulfogalactosamine + N-acetyl-D-6-sulfogalactosamine. With respect to regulation, addition of GM2A stimulates the hydrolysis of sulfated glycosphingolipid SM2 and the ganglioside GM2. Its function is as follows. Hydrolyzes the non-reducing end N-acetyl-D-hexosamine and/or sulfated N-acetyl-D-hexosamine of glycoconjugates, such as the oligosaccharide moieties from proteins and neutral glycolipids, or from certain mucopolysaccharides. The isozyme S is as active as the isozyme A on the anionic bis-sulfated glycans, the chondroitin-6-sulfate trisaccharide (C6S-3), and the dermatan sulfate pentasaccharide, and the sulfated glycosphingolipid SM2. The isozyme B does not hydrolyze each of these substrates, however hydrolyzes efficiently neutral oligosaccharide. Only the isozyme A is responsible for the degradation of GM2 gangliosides in the presence of GM2A. The sequence is that of Beta-hexosaminidase subunit alpha from Mus musculus (Mouse).